We begin with the raw amino-acid sequence, 447 residues long: Gamma-glutamyl phosphate reductase (447 aa).

It belongs to the gamma-glutamyl phosphate reductase family.

It localises to the cytoplasm. It carries out the reaction L-glutamate 5-semialdehyde + phosphate + NADP(+) = L-glutamyl 5-phosphate + NADPH + H(+). The protein operates within amino-acid biosynthesis; L-proline biosynthesis; L-glutamate 5-semialdehyde from L-glutamate: step 2/2. Catalyzes the NADPH-dependent reduction of L-glutamate 5-phosphate into L-glutamate 5-semialdehyde and phosphate. The product spontaneously undergoes cyclization to form 1-pyrroline-5-carboxylate. This chain is Gamma-glutamyl phosphate reductase, found in Methanosarcina mazei (strain ATCC BAA-159 / DSM 3647 / Goe1 / Go1 / JCM 11833 / OCM 88) (Methanosarcina frisia).